Here is a 130-residue protein sequence, read N- to C-terminus: Lysozyme C (130 aa).

Positions K1–V130 constitute a C-type lysozyme domain. Intrachain disulfides connect C6/C128, C30/C116, C65/C81, and C77/C95. Catalysis depends on residues E35 and D53.

Belongs to the glycosyl hydrolase 22 family. In terms of assembly, monomer.

The protein localises to the secreted. The catalysed reaction is Hydrolysis of (1-&gt;4)-beta-linkages between N-acetylmuramic acid and N-acetyl-D-glucosamine residues in a peptidoglycan and between N-acetyl-D-glucosamine residues in chitodextrins.. Its function is as follows. Lysozymes have primarily a bacteriolytic function; those in tissues and body fluids are associated with the monocyte-macrophage system and enhance the activity of immunoagents. The protein is Lysozyme C (LYZ) of Oryctolagus cuniculus (Rabbit).